Reading from the N-terminus, the 565-residue chain is MKSPAPSRPQKMALIPACIFLCFAALSVQAEETSVTPQPPDILLGPLFNDVQNAKLFPDQKTFADAVPNSDPLMILADYRIQQNQSGFDLRHFVNVNFTLPKEGEKYVPPEGQSLREHIDGLWPVLTRSTENTEKWDSLLPLPKPYVVPGGRFREVYYWDSYFTMLGLAESGHWDKVADMVANFAHEIDNYGHIPNGNRSYYLSRSQPPFFALMVELLAQHEGDAALKQYLPQMQKEYAYWMDGVENLQAGQQEKRVVKLQDGTLLNRYWDDRDTPRPESWVEDIATAKSNPNRPATEIYRDLRSAAASGWDFSSRWMDNPQQLNTLRTTSIVPVDLNSLMFKMEKILARASKAIGDNAMANQYETLANARQKGIEKYLWNDQQGWYADYDLKSHKVRNQLTAAALFPLYVNAAAKDRASKMATATKTHLLQPGGLNTTSVKSGQQWDAPNGWAPLQWVATEGLQNYGQKEVAMDISWHFLTNVQHTYDREKKLVEKYDVSTTGTGGGGGEYPLQDGFGWTNGVTLKMLDLICPKEQPCDNVPATRPLSESTTQPLKQKEAEPTP.

Residues 1–30 (MKSPAPSRPQKMALIPACIFLCFAALSVQA) form the signal peptide. Residues Arg-152, 159–160 (WD), Asn-196, 205–207 (RSQ), 277–279 (RPE), and Gly-310 each bind substrate. Active-site proton donor/acceptor residues include Asp-312 and Glu-496. Glu-511 is a binding site for substrate. The segment at 539–565 (CDNVPATRPLSESTTQPLKQKEAEPTP) is disordered.

Belongs to the glycosyl hydrolase 37 family. In terms of assembly, monomer.

Its subcellular location is the periplasm. The catalysed reaction is alpha,alpha-trehalose + H2O = alpha-D-glucose + beta-D-glucose. Provides the cells with the ability to utilize trehalose at high osmolarity by splitting it into glucose molecules that can subsequently be taken up by the phosphotransferase-mediated uptake system. The polypeptide is Periplasmic trehalase (Escherichia coli O1:K1 / APEC).